Consider the following 233-residue polypeptide: Orotidine 5'-phosphate decarboxylase (233 aa).

Substrate-binding positions include Asp11, Lys34, 61–70 (DLKLHDIPNT), Thr117, Arg179, Gln189, Gly209, and Arg210. Lys63 serves as the catalytic Proton donor.

The protein belongs to the OMP decarboxylase family. Type 1 subfamily. In terms of assembly, homodimer.

It carries out the reaction orotidine 5'-phosphate + H(+) = UMP + CO2. The protein operates within pyrimidine metabolism; UMP biosynthesis via de novo pathway; UMP from orotate: step 2/2. In terms of biological role, catalyzes the decarboxylation of orotidine 5'-monophosphate (OMP) to uridine 5'-monophosphate (UMP). This Streptococcus agalactiae serotype III (strain NEM316) protein is Orotidine 5'-phosphate decarboxylase.